The chain runs to 175 residues: Endothelin-2 (175 aa).

The signal sequence occupies residues 1–21 (MVSAWCSIALALLLALHEGKG). A propeptide spanning residues 22 to 43 (QAAATLEQPASAPKGRGPHLRF) is cleaved from the precursor. Disulfide bonds link Cys-46–Cys-60 and Cys-48–Cys-56. A propeptide spanning residues 67–175 (VNTAGQTAPY…IPAYSRWRKR (109 aa)) is cleaved from the precursor. Residues 93–108 (CECSTAGDSACATFCH) form an endothelin-like region.

This sequence belongs to the endothelin/sarafotoxin family.

It localises to the secreted. Vasoconstrictor. The chain is Endothelin-2 (Edn2) from Mus musculus (Mouse).